We begin with the raw amino-acid sequence, 1450 residues long: MSSVAVPFYQRRHKHFDQSYRNIQTRYVLEEYAARKAASRQAAHYESTGLGKTTCRLCARRARSLAHEAMQESRKRTHEQKSHASDEKRIKFASELSSLEREIHMARHHAREQLDRLAIQRMVEENMALERHVVEEKISRAPEILVRLRSHTVWEKMSVRLCFTVQGFPSPVVQWYKNEELITPASDPAKYSVENKYGVHVLHINRADFDDSATYSAVATNIHGQASTNCAVVVRRFRESEEPHPAGIMPFHLPLSYDVCFTHFDVQFLEKFGVTFATEGETLTLKCSVLVTPELKRLRPRAEWYRDDVLIKDSKWTKLYFGEGQAALSFTHLNKDDEGLYTLRMVTKGGVNECSAFLFVRDADALIAGAPGAPMDVKCHDANRDYVIVTWKPPNTTSQNPVIGYFVDKCEVGLENWVQCNDAPVKICKYPVTGLYEGRSYIFRVRAVNSAGISRPSRVSEPVAALDPVDLERTQTVHVDEGRKIVISKDDLEGDIQIPGPPTNVHASEISKTYVVLSWDPPVPRGREPLTYFIEKSMVGSGSWQRVNAQVAVKSPRYAVFDLAEGKPYVFRVLSANKHGISDPSEITEPIQPQDIVVVPSAPGRVVATRNTKTSVVVQWDKPKHEENLYGYYIDYSVVGSNQWEPANHKPINYNRFVVHGLETGEQYIFRVKAVNAVGFSENSQESEAIKVQAALTCPSYPHGITLLNCDGHSMTLGWKAPKYSGGSPILGYYIDKREANHKNWHEVNSSVISRTIYTVEDLTEDAFYEFKIAAANVVGIGHPSDPSEHFKCKAWTMPEPGPAYDLTVCEVRNTSLVLLWKAPVYEGKSPITGYLVDYKEVDTEDWITANEKPTSHRYFKVTDLHQGHTYVFKVRAVNDAGVGKSSEISEPVFVEASPGTKEIFSGVDEEGNIYLGFECKEATDASHFLWGKSYEEIEDSDKFKIETKGDHSKLYFKHPDKSDLGTYCISVSDTDGVSSSFVLDEEELERLMTLSNEIKNPTIPLKSELAYEVLDKGEVRFWIQAESLSPNSTYRFVINDKEVENGDRHKISCDHSNGIIEMVMDKFTIDNEGTYTVQIQDGKAKNQSSLVLIGDAFKAILAESELQRKEFLRKQGPHFSEFLYWEVTEECEVLLACKIANTKKETVFKWYRNGSGIDVDEAPDLQKGECHLTVPKLSRKDEGVYKATLSDDRGHDVSTLELSGKVYNDIILALSRVSGKTASPLKILCTEEGIRLQCFLKYYNEEMKVTWSHRESKISSGEKMKIGGGEDVAWLQITEPTEKDKGNYTFEIFSDKESFKRTLDLSGQAFDDALTEFQRLKAAAFAEKNRGKVIGGLPDVVTIMDGKTLNLTCTVFGNPDPEVVWFKNDKALELNEHYLVSLEQGKYASLTIKGVTSEDSGKYSIYVKNKYGGETVDVTVSVYRHGEKIPEVNQGQLAKPRLIPPSSST.

The disordered stretch occupies residues 66–87; it reads AHEAMQESRKRTHEQKSHASDE. 2 Ig-like C2-type domains span residues 142 to 233 and 254 to 359; these read PEIL…CAVV and PLSY…AFLF. Fibronectin type-III domains lie at 373 to 468, 501 to 596, 602 to 695, 698 to 800, and 803 to 900; these read APMD…ALDP, PPTN…PQDI, APGR…VQAA, CPSY…TMPE, and PAYD…ASPG. Ig-like C2-type domains are found at residues 899–995, 1002–1115, 1118–1204, 1225–1322, and 1333–1422; these read PGTK…LMTL, PTIP…FLRK, PHFS…LELS, PLKI…QRLK, and KVIG…VTVS.

In terms of tissue distribution, expressed in pectoralis and cardiac muscle.

Its function is as follows. Is a structural constituent of myofibrillar M-band in striated muscle. The protein is M-protein, striated muscle of Gallus gallus (Chicken).